The sequence spans 151 residues: D-aminoacyl-tRNA deacylase (151 aa).

The Gly-cisPro motif, important for rejection of L-amino acids signature appears at 137–138 (GP).

The protein belongs to the DTD family. Homodimer.

The protein resides in the cytoplasm. It carries out the reaction glycyl-tRNA(Ala) + H2O = tRNA(Ala) + glycine + H(+). The enzyme catalyses a D-aminoacyl-tRNA + H2O = a tRNA + a D-alpha-amino acid + H(+). Functionally, an aminoacyl-tRNA editing enzyme that deacylates mischarged D-aminoacyl-tRNAs. Also deacylates mischarged glycyl-tRNA(Ala), protecting cells against glycine mischarging by AlaRS. Acts via tRNA-based rather than protein-based catalysis; rejects L-amino acids rather than detecting D-amino acids in the active site. By recycling D-aminoacyl-tRNA to D-amino acids and free tRNA molecules, this enzyme counteracts the toxicity associated with the formation of D-aminoacyl-tRNA entities in vivo and helps enforce protein L-homochirality. The sequence is that of D-aminoacyl-tRNA deacylase from Solibacter usitatus (strain Ellin6076).